The primary structure comprises 304 residues: Acetaldehyde dehydrogenase (304 aa).

Residue Cys131 is the Acyl-thioester intermediate of the active site. NAD(+) is bound by residues 162–170 (SAGPGTRKN) and Asn273.

Belongs to the acetaldehyde dehydrogenase family.

It catalyses the reaction acetaldehyde + NAD(+) + CoA = acetyl-CoA + NADH + H(+). The polypeptide is Acetaldehyde dehydrogenase (Polaromonas naphthalenivorans (strain CJ2)).